The sequence spans 387 residues: BTB and MATH domain-containing protein 38 (387 aa).

An MATH domain is found at 79 to 204 (EGMLKLEIPN…NEMVTVTARV (126 aa)). Positions 228-295 (CDMTLVINKQ…IYPCHKPITS (68 aa)) constitute a BTB domain.

The polypeptide is BTB and MATH domain-containing protein 38 (bath-38) (Caenorhabditis elegans).